A 22-amino-acid chain; its full sequence is Peptide PGLa-BM3 (22 aa).

Leucine 22 is modified (leucine amide).

In terms of tissue distribution, expressed by the skin glands.

The protein resides in the secreted. Its function is as follows. Antimicrobial peptide. This Xenopus boumbaensis (Mawa clawed frog) protein is Peptide PGLa-BM3.